We begin with the raw amino-acid sequence, 135 residues long: Sex-regulated protein janus-A (135 aa).

Lys37 is a substrate binding site. His63 serves as the catalytic Proton acceptor. Ser104–Gly106 serves as a coordination point for substrate.

Belongs to the janus family.

JanA and janB regulate somatic sex differentiation. This is Sex-regulated protein janus-A (janA) from Drosophila orena (Fruit fly).